The following is a 149-amino-acid chain: General odorant-binding protein 57c (149 aa).

Positions 1–16 are cleaved as a signal peptide; that stretch reads MLKLWLICILTVSVVS. Cystine bridges form between Cys-32-Cys-70, Cys-66-Cys-117, and Cys-106-Cys-126.

Belongs to the PBP/GOBP family.

Present in the aqueous fluid surrounding olfactory sensory dendrites and are thought to aid in the capture and transport of hydrophobic odorants into and through this fluid. The chain is General odorant-binding protein 57c from Drosophila melanogaster (Fruit fly).